The chain runs to 325 residues: MSVTRINQQTECPSSVHDLVSCWGGCTQSKTSTDSGLEKRFELNFAQPVDIGTVTVKQLASVMERAGESLRQNSAELGIHTLKFDRSLLVFTAKQIVVRSSVSVMLHEAVHPMLELMRSHNIIVDWASFMRVNYGSPWDMTSETSDIMAHEYAELKSAFPTGHPYLAGPVDRDHCFYFVYDGIDRDPSSCRRENDVQINVYMYNVQADDEYDLDGNTKEQQLLVSHCAGEYETLRVSTYGSTHPFASFETNAVSAASDITKIVNGLLKKFYPERVLLVLLQDRDAQGTTACGVMDRLEGFTVVHRGANHFGGGYVFHQATYARSA.

Belongs to the eukaryotic AdoMetDC family. As to quaternary structure, forms a heterodimer with S-adenosylmethionine decarboxylase AdoMetDC; heterodimerization is required to activate AdoMetDC.

It functions in the pathway amine and polyamine biosynthesis; S-adenosylmethioninamine biosynthesis; S-adenosylmethioninamine from S-adenosyl-L-methionine: step 1/1. In terms of biological role, probably has no catalytic activity due to the loss of several residues required for processing and catalysis. Forms a complex with S-adenosylmethionine decarboxylase AdoMetDC which is essential to activate AdoMetDC. Required for the biosynthesis of the polyamine spermidine. Required for growth and survival during the bloodstream life cycle stage. The polypeptide is Inactive S-adenosylmethionine decarboxylase prozyme (Trypanosoma brucei brucei).